Consider the following 463-residue polypeptide: T-box transcription factor TBX1-A (463 aa).

Disordered stretches follow at residues 39–58 (SPSP…PCSA) and 75–104 (GASS…VKKN). Positions 75-96 (GASSSSCASSTPGSGSTGSSSS) are enriched in low complexity. The segment at residues 119–297 (LWDEFNQLGT…SNPFAKGFRD (179 aa)) is a DNA-binding region (T-box). Disordered regions lie at residues 320–354 (RSRN…PLHG) and 377–409 (VPLS…PYKY). Positions 323–332 (NPVSSPTQNG) are enriched in polar residues. The segment covering 333 to 347 (SDKDGDGRREYERDA) has biased composition (basic and acidic residues). Residues 420–431 (KTRPAPYPLPTI) carry the Nuclear localization signal motif.

As to quaternary structure, binds DNA as a dimer. Interacts with dscr6/ripply3.

It localises to the nucleus. Functionally, probable transcriptional regulator involved in developmental processes. Binds to the palindromic T site 5'-TTCACACCTAGGTGTGAA-3' DNA sequence. Induces pre-placodal ectoderm (PPE) gene expression in regions where RIPPLY3 is absent. Plays a role in the formation of the anteroposterior (AP) axis during embryonic development; required to establish the posterolateral border of the pre-placodal ectoderm (PPE) acting downstream of the retinoic acid receptor (RAR) signaling. In Xenopus laevis (African clawed frog), this protein is T-box transcription factor TBX1-A (tbx1-a).